We begin with the raw amino-acid sequence, 518 residues long: E3 ubiquitin-protein ligase TRIM39 (518 aa).

The RING-type zinc finger occupies 29–70; sequence CSVCLEYLKEPVIIECGHNFCKACITRWWEDLERDFPCPVCR. The segment at 102–143 adopts a B box-type zinc-finger fold; it reads RDESLCPQHHEALSLFCYEDQEAVCLICAISHTHRAHTVVPL. Positions 107, 110, 129, and 135 each coordinate Zn(2+). Residues 181-250 are a coiled coil; the sequence is ELKRLVESRR…AHLAAEVEGK (70 aa). Interaction with CDKN1A stretches follow at residues 268–337 and 389–518; these read KNIP…QLIA and TSGR…TDWE. The B30.2/SPRY domain occupies 319–514; it reads SNFPRQYFAL…NAAPLTIRPP (196 aa).

This sequence belongs to the TRIM/RBCC family. In terms of assembly, interacts with MOAP1. Interacts with CDKN1A. Post-translationally, autoubiquitinated.

It localises to the cytoplasm. Its subcellular location is the cytosol. The protein localises to the mitochondrion. The protein resides in the nucleus. The enzyme catalyses S-ubiquitinyl-[E2 ubiquitin-conjugating enzyme]-L-cysteine + [acceptor protein]-L-lysine = [E2 ubiquitin-conjugating enzyme]-L-cysteine + N(6)-ubiquitinyl-[acceptor protein]-L-lysine.. It functions in the pathway protein modification; protein ubiquitination. Its function is as follows. E3 ubiquitin-protein ligase. May facilitate apoptosis by inhibiting APC/C-Cdh1-mediated poly-ubiquitination and subsequent proteasome-mediated degradation of the pro-apoptotic protein MOAP1. Regulates the G1/S transition of the cell cycle and DNA damage-induced G2 arrest by stabilizing CDKN1A/p21. Positively regulates CDKN1A/p21 stability by competing with DTL for CDKN1A/p21 binding, therefore disrupting DCX(DTL) E3 ubiquitin ligase complex-mediated CDKN1A/p21 ubiquitination and degradation. In Pan troglodytes (Chimpanzee), this protein is E3 ubiquitin-protein ligase TRIM39 (TRIM39).